A 179-amino-acid polypeptide reads, in one-letter code: UPF0227 protein Sbal_2415 (179 aa).

This sequence belongs to the UPF0227 family.

This is UPF0227 protein Sbal_2415 from Shewanella baltica (strain OS155 / ATCC BAA-1091).